The primary structure comprises 248 residues: N-acylneuraminate-9-phosphatase (248 aa).

Asp-12 lines the Mg(2+) pocket. Phosphate contacts are provided by Leu-13, Asp-14, Thr-131, Asn-132, and Lys-164. Asp-14 contacts Mg(2+). Asp-189 contacts Mg(2+).

The protein belongs to the HAD-like hydrolase superfamily. NANP family. Mg(2+) serves as cofactor.

It catalyses the reaction N-acetylneuraminate 9-phosphate + H2O = N-acetylneuraminate + phosphate. The enzyme catalyses N-glycoloylneuraminate 9-phosphate + H2O = N-glycoloylneuraminate + phosphate. It participates in amino-sugar metabolism; N-acetylneuraminate biosynthesis. Inhibited by calcium. Inhibited by vanadate, sodium orthovanadate and phosphonate. In terms of biological role, catalyzes the dephosphorylation of N-acylneuraminate 9-phosphate (Neu5Ac-9-P) to N-acetylneuraminic acid (Neu5Ac or sialic acid). Can also use N-glycoloylneuraminate 9-phosphate as substrate. The sequence is that of N-acylneuraminate-9-phosphatase from Homo sapiens (Human).